Reading from the N-terminus, the 508-residue chain is Lysine--tRNA ligase (508 aa).

The Mg(2+) site is built by Glu-418 and Glu-425.

This sequence belongs to the class-II aminoacyl-tRNA synthetase family. As to quaternary structure, homodimer. Mg(2+) is required as a cofactor.

It localises to the cytoplasm. It catalyses the reaction tRNA(Lys) + L-lysine + ATP = L-lysyl-tRNA(Lys) + AMP + diphosphate. This chain is Lysine--tRNA ligase, found in Burkholderia pseudomallei (strain K96243).